A 450-amino-acid polypeptide reads, in one-letter code: UDP-N-acetylmuramoylalanine--D-glutamate ligase (450 aa).

An ATP-binding site is contributed by 119 to 125; that stretch reads GSNGKTT.

It belongs to the MurCDEF family.

It is found in the cytoplasm. It carries out the reaction UDP-N-acetyl-alpha-D-muramoyl-L-alanine + D-glutamate + ATP = UDP-N-acetyl-alpha-D-muramoyl-L-alanyl-D-glutamate + ADP + phosphate + H(+). The protein operates within cell wall biogenesis; peptidoglycan biosynthesis. Cell wall formation. Catalyzes the addition of glutamate to the nucleotide precursor UDP-N-acetylmuramoyl-L-alanine (UMA). The sequence is that of UDP-N-acetylmuramoylalanine--D-glutamate ligase from Streptococcus pneumoniae (strain Taiwan19F-14).